A 153-amino-acid chain; its full sequence is 3-hydroxyacyl-[acyl-carrier-protein] dehydratase FabZ (153 aa).

H57 is an active-site residue.

It belongs to the thioester dehydratase family. FabZ subfamily.

The protein resides in the cytoplasm. It carries out the reaction a (3R)-hydroxyacyl-[ACP] = a (2E)-enoyl-[ACP] + H2O. Functionally, involved in unsaturated fatty acids biosynthesis. Catalyzes the dehydration of short chain beta-hydroxyacyl-ACPs and long chain saturated and unsaturated beta-hydroxyacyl-ACPs. The polypeptide is 3-hydroxyacyl-[acyl-carrier-protein] dehydratase FabZ (Aeromonas hydrophila subsp. hydrophila (strain ATCC 7966 / DSM 30187 / BCRC 13018 / CCUG 14551 / JCM 1027 / KCTC 2358 / NCIMB 9240 / NCTC 8049)).